The following is a 488-amino-acid chain: Cobyric acid synthase (488 aa).

The region spanning 247 to 440 (LLRVIVPVLP…VHGVFDEPTA (194 aa)) is the GATase cobBQ-type domain. Residue Cys328 is the Nucleophile of the active site. Residue His432 is part of the active site.

This sequence belongs to the CobB/CobQ family. CobQ subfamily.

Its pathway is cofactor biosynthesis; adenosylcobalamin biosynthesis. Its function is as follows. Catalyzes amidations at positions B, D, E, and G on adenosylcobyrinic A,C-diamide. NH(2) groups are provided by glutamine, and one molecule of ATP is hydrogenolyzed for each amidation. This is Cobyric acid synthase from Cupriavidus pinatubonensis (strain JMP 134 / LMG 1197) (Cupriavidus necator (strain JMP 134)).